We begin with the raw amino-acid sequence, 325 residues long: Transaldolase (325 aa).

Lysine 125 (schiff-base intermediate with substrate) is an active-site residue.

It belongs to the transaldolase family. Type 2 subfamily.

The protein resides in the cytoplasm. It catalyses the reaction D-sedoheptulose 7-phosphate + D-glyceraldehyde 3-phosphate = D-erythrose 4-phosphate + beta-D-fructose 6-phosphate. Its pathway is carbohydrate degradation; pentose phosphate pathway; D-glyceraldehyde 3-phosphate and beta-D-fructose 6-phosphate from D-ribose 5-phosphate and D-xylulose 5-phosphate (non-oxidative stage): step 2/3. In terms of biological role, transaldolase is important for the balance of metabolites in the pentose-phosphate pathway. The sequence is that of Transaldolase (tal) from Campylobacter jejuni subsp. jejuni serotype O:2 (strain ATCC 700819 / NCTC 11168).